We begin with the raw amino-acid sequence, 76 residues long: Spore germination protein-like protein YdzR (76 aa).

The protein belongs to the GerPA/GerPF family.

The sequence is that of Spore germination protein-like protein YdzR (ydzR) from Bacillus subtilis (strain 168).